We begin with the raw amino-acid sequence, 119 residues long: Bombesin (119 aa).

An N-terminal signal peptide occupies residues M1–C29. The propeptide occupies M30–L44. Methionine amide is present on M58. Residues S62–N119 constitute a propeptide that is removed on maturation.

The protein belongs to the bombesin/neuromedin-B/ranatensin family. Localized to the cutaneous granular glands in the skin and the brain.

It is found in the secreted. Functionally, stimulates smooth muscle contraction. Role in induction of hypothermia, stimulation of DNA replication and release of many gastrointestinal hormones. The chain is Bombesin from Bombina orientalis (Oriental fire-bellied toad).